Reading from the N-terminus, the 442-residue chain is Tyrosine-protein kinase transforming protein RYK (442 aa).

A Protein kinase domain is found at 45–316 (LSLGKVLGEG…QLKVHLEKLL (272 aa)). Residues 51 to 59 (LGEGEFGSV) and Lys-77 each bind ATP. Catalysis depends on Asp-181, which acts as the Proton acceptor. Tyr-212 carries the post-translational modification Phosphotyrosine; by autocatalysis.

It belongs to the protein kinase superfamily. Tyr protein kinase family. AXL/UFO subfamily.

It is found in the host cell membrane. The enzyme catalyses L-tyrosyl-[protein] + ATP = O-phospho-L-tyrosyl-[protein] + ADP + H(+). The chain is Tyrosine-protein kinase transforming protein RYK (V-RYK) from Avian retrovirus RPL30.